The chain runs to 577 residues: Arginine--tRNA ligase (577 aa).

The 'HIGH' region motif lies at 123 to 133 (PNLAKEMHVGH).

The protein belongs to the class-I aminoacyl-tRNA synthetase family. In terms of assembly, monomer.

It is found in the cytoplasm. It carries out the reaction tRNA(Arg) + L-arginine + ATP = L-arginyl-tRNA(Arg) + AMP + diphosphate. This is Arginine--tRNA ligase from Marinomonas sp. (strain MWYL1).